A 64-amino-acid chain; its full sequence is Prokaryotic ubiquitin-like protein Pup (64 aa).

A disordered region spans residues methionine 1–threonine 36. An ARC ATPase binding region spans residues threonine 21–tyrosine 58. Residues glutamine 26–glutamate 52 are a coiled coil. Glutamine 64 is modified (deamidated glutamine). Glutamine 64 is covalently cross-linked (Isoglutamyl lysine isopeptide (Gln-Lys) (interchain with K-? in acceptor proteins)).

It belongs to the prokaryotic ubiquitin-like protein family. As to quaternary structure, strongly interacts with the proteasome-associated ATPase ARC through a hydrophobic interface; the interacting region of Pup lies in its C-terminal half. There is one Pup binding site per ARC hexamer ring. Post-translationally, is modified by deamidation of its C-terminal glutamine to glutamate by the deamidase Dop, a prerequisite to the subsequent pupylation process.

The protein operates within protein degradation; proteasomal Pup-dependent pathway. In terms of biological role, protein modifier that is covalently attached to lysine residues of substrate proteins, thereby targeting them for proteasomal degradation. The tagging system is termed pupylation. The sequence is that of Prokaryotic ubiquitin-like protein Pup from Mycobacterium ulcerans (strain Agy99).